The following is a 479-amino-acid chain: Proline--tRNA ligase (479 aa).

It belongs to the class-II aminoacyl-tRNA synthetase family. ProS type 3 subfamily. As to quaternary structure, homodimer.

It localises to the cytoplasm. It catalyses the reaction tRNA(Pro) + L-proline + ATP = L-prolyl-tRNA(Pro) + AMP + diphosphate. In terms of biological role, catalyzes the attachment of proline to tRNA(Pro) in a two-step reaction: proline is first activated by ATP to form Pro-AMP and then transferred to the acceptor end of tRNA(Pro). The chain is Proline--tRNA ligase from Mesomycoplasma hyopneumoniae (strain 7448) (Mycoplasma hyopneumoniae).